The following is a 255-amino-acid chain: 3-oxo-5-alpha-steroid 4-dehydrogenase 1 (255 aa).

The next 5 helical transmembrane spans lie at 6 to 26 (LCLLDALVYLEGFLAFVAFVG), 82 to 102 (VLLAMFLIHYVQRTLVFPVLI), 107 to 127 (PTLLFTFVLAFLFCTLNGYLQ), 142 to 162 (VTHPCFLTGFALWLVGMVINI), and 205 to 225 (FALASWSLQGVVFALFTLCAL).

The protein belongs to the steroid 5-alpha reductase family.

Its subcellular location is the microsome membrane. The protein resides in the endoplasmic reticulum membrane. The catalysed reaction is a 3-oxo-5alpha-steroid + NADP(+) = a 3-oxo-Delta(4)-steroid + NADPH + H(+). It carries out the reaction 5alpha-pregnane-3,20-dione + NADP(+) = progesterone + NADPH + H(+). The enzyme catalyses 17beta-hydroxy-5alpha-androstan-3-one + NADP(+) = testosterone + NADPH + H(+). It catalyses the reaction androst-4-ene-3,17-dione + NADPH + H(+) = 5alpha-androstan-3,17-dione + NADP(+). Functionally, converts testosterone into 5-alpha-dihydrotestosterone and progesterone or corticosterone into their corresponding 5-alpha-3-oxosteroids. It plays a central role in sexual differentiation and androgen physiology. The chain is 3-oxo-5-alpha-steroid 4-dehydrogenase 1 from Mus musculus (Mouse).